Here is a 477-residue protein sequence, read N- to C-terminus: Aspartyl/glutamyl-tRNA(Asn/Gln) amidotransferase subunit B (477 aa).

It belongs to the GatB/GatE family. GatB subfamily. As to quaternary structure, heterotrimer of A, B and C subunits.

The catalysed reaction is L-glutamyl-tRNA(Gln) + L-glutamine + ATP + H2O = L-glutaminyl-tRNA(Gln) + L-glutamate + ADP + phosphate + H(+). The enzyme catalyses L-aspartyl-tRNA(Asn) + L-glutamine + ATP + H2O = L-asparaginyl-tRNA(Asn) + L-glutamate + ADP + phosphate + 2 H(+). Allows the formation of correctly charged Asn-tRNA(Asn) or Gln-tRNA(Gln) through the transamidation of misacylated Asp-tRNA(Asn) or Glu-tRNA(Gln) in organisms which lack either or both of asparaginyl-tRNA or glutaminyl-tRNA synthetases. The reaction takes place in the presence of glutamine and ATP through an activated phospho-Asp-tRNA(Asn) or phospho-Glu-tRNA(Gln). This chain is Aspartyl/glutamyl-tRNA(Asn/Gln) amidotransferase subunit B, found in Coxiella burnetii (strain RSA 493 / Nine Mile phase I).